Here is a 54-residue protein sequence, read N- to C-terminus: Large ribosomal subunit protein bL33C (54 aa).

It belongs to the bacterial ribosomal protein bL33 family.

This Streptomyces griseus subsp. griseus (strain JCM 4626 / CBS 651.72 / NBRC 13350 / KCC S-0626 / ISP 5235) protein is Large ribosomal subunit protein bL33C.